We begin with the raw amino-acid sequence, 195 residues long: Archaetidylinositol phosphate synthase (195 aa).

Helical transmembrane passes span 27 to 47 (IALP…AASA) and 54 to 74 (LITG…DGAV). Residues Asp68, Asp71, Asp89, and Asp93 each coordinate Mg(2+). Asp93 acts as the Proton acceptor in catalysis. 2 consecutive transmembrane segments (helical) span residues 99–119 (IIII…LLAL) and 158–178 (LAGY…LAAL).

This sequence belongs to the CDP-alcohol phosphatidyltransferase class-I family. Mn(2+) serves as cofactor. It depends on Mg(2+) as a cofactor.

It localises to the cell membrane. It carries out the reaction CDP-2,3-bis-O-(phytanyl)-sn-glycerol + 1D-myo-inositol 3-phosphate = saturated 1-archaetidyl-1D-myo-inositol 3-phosphate + CMP + H(+). The protein operates within lipid metabolism; phospholipid metabolism. Functionally, catalyzes the formation of archaetidylinositol phosphate (AIP) from CDP-archaeol (CDP-ArOH or CDP-2,3-bis-(O-phytanyl)-sn-glycerol) and 1L-myo-inositol 1-phosphate (IP or 1D-myo-inositol 3-phosphate). AIP is a precursor of archaetidyl-myo-inositol (AI), an ether-type inositol phospholipid ubiquitously distributed in archaea membranes and essential for glycolipid biosynthesis in archaea. This Methanothermobacter thermautotrophicus (strain ATCC 29096 / DSM 1053 / JCM 10044 / NBRC 100330 / Delta H) (Methanobacterium thermoautotrophicum) protein is Archaetidylinositol phosphate synthase.